A 129-amino-acid chain; its full sequence is Small ribosomal subunit protein uS11 (129 aa).

This sequence belongs to the universal ribosomal protein uS11 family. As to quaternary structure, part of the 30S ribosomal subunit. Interacts with proteins S7 and S18. Binds to IF-3.

Its function is as follows. Located on the platform of the 30S subunit, it bridges several disparate RNA helices of the 16S rRNA. Forms part of the Shine-Dalgarno cleft in the 70S ribosome. The chain is Small ribosomal subunit protein uS11 from Methylobacterium radiotolerans (strain ATCC 27329 / DSM 1819 / JCM 2831 / NBRC 15690 / NCIMB 10815 / 0-1).